Reading from the N-terminus, the 79-residue chain is Bacteriochlorophyll c-binding protein (79 aa).

His-25 serves as a coordination point for a bacteriochlorophyll c.

The protein belongs to the BChl C/E-binding protein family.

The protein localises to the chlorosome. It is found in the chlorosome envelope. Functionally, component of the photosynthetic apparatus. The light harvesting B740 complex binds bacteriochlorophyll c. The sequence is that of Bacteriochlorophyll c-binding protein (csmA) from Chlorobaculum tepidum (strain ATCC 49652 / DSM 12025 / NBRC 103806 / TLS) (Chlorobium tepidum).